Here is a 161-residue protein sequence, read N- to C-terminus: Allophycocyanin beta chain (161 aa).

Position 71 is an N4-methylasparagine (Asn-71). A (2R,3E)-phycocyanobilin-binding site is contributed by Cys-81.

It belongs to the phycobiliprotein family. Heterodimer of an alpha and a beta chain. Contains one covalently linked phycocyanobilin chromophore.

It localises to the plastid. Its subcellular location is the chloroplast thylakoid membrane. Functionally, light-harvesting photosynthetic bile pigment-protein from the phycobiliprotein complex. Allophycocyanin has a maximum absorption at approximately 650 nanometers. The sequence is that of Allophycocyanin beta chain (apcB) from Pyropia haitanensis (Red seaweed).